Consider the following 283-residue polypeptide: Tumor necrosis factor receptor superfamily member 14 (283 aa).

Residues 1 to 38 form the signal peptide; it reads MEPPGDWGPPPWRSTPKTDVLRLVLYLTFLGAPCYAPA. At 39 to 202 the chain is on the extracellular side; that stretch reads LPSCKEDEYP…GAGTSSSHWV (164 aa). Cystine bridges form between cysteine 42–cysteine 53, cysteine 54–cysteine 67, cysteine 57–cysteine 75, cysteine 78–cysteine 93, cysteine 96–cysteine 111, cysteine 99–cysteine 119, cysteine 121–cysteine 138, and cysteine 127–cysteine 135. TNFR-Cys repeat units follow at residues 42-75, 78-119, and 121-162; these read CKEDEYPVGSECCPKCSPGYRVKEACGELTGTVC, CPPG…NAVC, and CSPG…DTLC. The N-linked (GlcNAc...) asparagine glycan is linked to asparagine 110. An N-linked (GlcNAc...) asparagine glycan is attached at asparagine 173. Residues 203–223 form a helical membrane-spanning segment; the sequence is WWFLSGSLVIVIVCSTVGLII. Residues 224–283 are Cytoplasmic-facing; sequence CVKRRKPRGDVVKVIVSVQRKRQEAEGEATVIEALQAPPDVTTVAVEETIPSFTGRSPNH. Serine 240 is subject to Phosphoserine.

This sequence belongs to the tumor necrosis factor receptor superfamily. In terms of assembly, interacts with TRAF2, TRAF3 and TRAF5. Interacts (via CRD1/TNFR-Cys 1) with CD160; this interaction is direct. Interacts with LTA and TNFSF14. Interacts (via CRD1/TNFR-Cys 1) in cis and trans with BTLA; the cis interactions inhibits the trans interactions. (Microbial infection) Interacts with herpes simplex virus 1/HHV-1 envelope glycoprotein D. As to quaternary structure, (Microbial infection) Interacts with herpes simplex virus 2/HHV-2 envelope glycoprotein D. N-glycosylated. Widely expressed, with the highest expression in lung, spleen and thymus. Expressed in a subpopulation of B cells and monocytes. Expressed in naive T cells.

Its subcellular location is the cell membrane. In terms of biological role, receptor for four distinct ligands: The TNF superfamily members TNFSF14/LIGHT and homotrimeric LTA/lymphotoxin-alpha and the immunoglobulin superfamily members BTLA and CD160, altogether defining a complex stimulatory and inhibitory signaling network. Signals via the TRAF2-TRAF3 E3 ligase pathway to promote immune cell survival and differentiation. Participates in bidirectional cell-cell contact signaling between antigen presenting cells and lymphocytes. In response to ligation of TNFSF14/LIGHT, delivers costimulatory signals to T cells, promoting cell proliferation and effector functions. Interacts with CD160 on NK cells, enhancing IFNG production and anti-tumor immune response. In the context of bacterial infection, acts as a signaling receptor on epithelial cells for CD160 from intraepithelial lymphocytes, triggering the production of antimicrobial proteins and pro-inflammatory cytokines. Upon binding to CD160 on activated CD4+ T cells, down-regulates CD28 costimulatory signaling, restricting memory and alloantigen-specific immune response. May interact in cis (on the same cell) or in trans (on other cells) with BTLA. In cis interactions, appears to play an immune regulatory role inhibiting in trans interactions in naive T cells to maintain a resting state. In trans interactions, can predominate during adaptive immune response to provide survival signals to effector T cells. (Microbial infection) Acts as a receptor for Herpes simplex virus 1/HHV-1. Functionally, (Microbial infection) Acts as a receptor for Herpes simplex virus 2/HHV-2. The chain is Tumor necrosis factor receptor superfamily member 14 from Homo sapiens (Human).